Here is a 143-residue protein sequence, read N- to C-terminus: Putative complexin-1 (143 aa).

The interval E16–Y72 is disordered. Composition is skewed to basic and acidic residues over residues M23–T33 and L44–Y72. Residues I40–K71 are a coiled coil.

The protein belongs to the complexin/synaphin family.

The protein resides in the cytoplasm. It is found in the cytosol. In terms of biological role, positively regulates a late step in synaptic vesicle exocytosis. The protein is Putative complexin-1 (cpx-1) of Caenorhabditis elegans.